Reading from the N-terminus, the 461-residue chain is 26S proteasome regulatory subunit 8 (461 aa).

G185 to T192 is a binding site for ATP.

The protein belongs to the AAA ATPase family.

The protein resides in the cytoplasm. Its subcellular location is the nucleus. Its function is as follows. The 26S proteasome is involved in the ATP-dependent degradation of ubiquitinated proteins. The regulatory (or ATPase) complex confers ATP dependency and substrate specificity to the 26S complex. The protein is 26S proteasome regulatory subunit 8 (psmc5) of Xenopus laevis (African clawed frog).